The sequence spans 455 residues: Protein png1 (455 aa).

The interval 1–110 (MTDGRQQHTR…LPVFPSPPRD (110 aa)) is disordered. A compositionally biased stretch (low complexity) spans 38–53 (SLQEQSRSRSRTQSPS). A compositionally biased stretch (pro residues) spans 59–73 (HTPPHPSRAPPPPPT). A compositionally biased stretch (low complexity) spans 74–98 (GAHYPSSQSPSQQHQQHQLPASSSL). Zn(2+) is bound by residues Cys-199, Cys-202, Cys-231, and Cys-236. Residues 408–455 (NLIPREQTSGRPGEQKTPASMQDTPVDWVAAQQMGPGQSGPDRSQDGR) form a disordered region.

It belongs to the transglutaminase-like superfamily. PNGase family.

The polypeptide is Protein png1 (png1) (Aspergillus fumigatus (strain ATCC MYA-4609 / CBS 101355 / FGSC A1100 / Af293) (Neosartorya fumigata)).